Here is a 350-residue protein sequence, read N- to C-terminus: Glycerol-1-phosphate dehydrogenase [NAD(P)+] (350 aa).

NAD(+) is bound by residues 97–101 (GSKID) and 119–122 (TTPS). Aspartate 124 is a binding site for substrate. An NAD(+)-binding site is contributed by serine 128. Residue aspartate 171 coordinates substrate. Positions 171 and 251 each coordinate Zn(2+). Histidine 255 contributes to the substrate binding site. Histidine 267 lines the Zn(2+) pocket.

The protein belongs to the glycerol-1-phosphate dehydrogenase family. Requires Zn(2+) as cofactor.

It is found in the cytoplasm. The catalysed reaction is sn-glycerol 1-phosphate + NAD(+) = dihydroxyacetone phosphate + NADH + H(+). The enzyme catalyses sn-glycerol 1-phosphate + NADP(+) = dihydroxyacetone phosphate + NADPH + H(+). Its pathway is membrane lipid metabolism; glycerophospholipid metabolism. Its function is as follows. Catalyzes the NAD(P)H-dependent reduction of dihydroxyacetonephosphate (DHAP or glycerone phosphate) to glycerol 1-phosphate (G1P). The G1P thus generated is used as the glycerophosphate backbone of phospholipids in the cellular membranes of Archaea. The polypeptide is Glycerol-1-phosphate dehydrogenase [NAD(P)+] (Picrophilus torridus (strain ATCC 700027 / DSM 9790 / JCM 10055 / NBRC 100828 / KAW 2/3)).